A 100-amino-acid chain; its full sequence is Small ribosomal subunit protein uS14c (100 aa).

The protein belongs to the universal ribosomal protein uS14 family. In terms of assembly, part of the 30S ribosomal subunit.

The protein localises to the plastid. It localises to the chloroplast. Functionally, binds 16S rRNA, required for the assembly of 30S particles. This is Small ribosomal subunit protein uS14c from Lepidium virginicum (Virginia pepperweed).